The sequence spans 198 residues: Recombination protein RecR (198 aa).

A C4-type zinc finger spans residues 57–72; it reads CSICGNLTDDDPCHIC. Positions 80 to 175 constitute a Toprim domain; the sequence is TTILVVEDAK…KVTRLARGLA (96 aa).

This sequence belongs to the RecR family.

Its function is as follows. May play a role in DNA repair. It seems to be involved in an RecBC-independent recombinational process of DNA repair. It may act with RecF and RecO. The chain is Recombination protein RecR from Streptococcus pyogenes serotype M5 (strain Manfredo).